We begin with the raw amino-acid sequence, 178 residues long: ATP-dependent protease subunit HslV (178 aa).

Thr7 is an active-site residue. Na(+) contacts are provided by Gly162, Cys165, and Thr168.

This sequence belongs to the peptidase T1B family. HslV subfamily. As to quaternary structure, a double ring-shaped homohexamer of HslV is capped on each side by a ring-shaped HslU homohexamer. The assembly of the HslU/HslV complex is dependent on binding of ATP.

The protein localises to the cytoplasm. It carries out the reaction ATP-dependent cleavage of peptide bonds with broad specificity.. Its activity is regulated as follows. Allosterically activated by HslU binding. Its function is as follows. Protease subunit of a proteasome-like degradation complex believed to be a general protein degrading machinery. In Paraburkholderia xenovorans (strain LB400), this protein is ATP-dependent protease subunit HslV.